The sequence spans 57 residues: Small ribosomal subunit protein eS31 (57 aa).

Residues Cys-29, Cys-32, Cys-47, and Cys-50 each coordinate Zn(2+). Residues 29–50 (CSRCGKGTYMSEHKDRNTCGKC) form a C4-type zinc finger.

Belongs to the eukaryotic ribosomal protein eS31 family. In terms of assembly, part of the 30S ribosomal subunit. Requires Zn(2+) as cofactor.

This chain is Small ribosomal subunit protein eS31, found in Nitrosopumilus maritimus (strain SCM1).